A 323-amino-acid polypeptide reads, in one-letter code: Putative ABC transporter substrate-binding lipoprotein YhfQ (323 aa).

A signal peptide spans 1–19; the sequence is MKKTLIILTVLLLSVLTAA. Cys-20 is lipidated: N-palmitoyl cysteine. Cys-20 carries the S-diacylglycerol cysteine lipid modification. In terms of domain architecture, Fe/B12 periplasmic-binding spans 51–322; that stretch reads RVVVLELGFI…ELQKEMPAAK (272 aa).

The protein belongs to the bacterial solute-binding protein 8 family. As to quaternary structure, interacts with FloT.

It localises to the cell membrane. It is found in the membrane raft. This chain is Putative ABC transporter substrate-binding lipoprotein YhfQ (yhfQ), found in Bacillus subtilis (strain 168).